A 441-amino-acid chain; its full sequence is Ribosomal protein uS12 methylthiotransferase RimO (441 aa).

The 111-residue stretch at 7–117 (PKVSFVSLGC…VLDAVHRALP (111 aa)) folds into the MTTase N-terminal domain. [4Fe-4S] cluster-binding residues include Cys16, Cys52, Cys81, Cys148, Cys152, and Cys155. Residues 134–371 (LTPRHYAYLK…MARQQKISAR (238 aa)) form the Radical SAM core domain. Positions 374–440 (KRKVGTRQQV…AYDLHGSVAG (67 aa)) constitute a TRAM domain.

The protein belongs to the methylthiotransferase family. RimO subfamily. [4Fe-4S] cluster serves as cofactor.

Its subcellular location is the cytoplasm. The catalysed reaction is L-aspartate(89)-[ribosomal protein uS12]-hydrogen + (sulfur carrier)-SH + AH2 + 2 S-adenosyl-L-methionine = 3-methylsulfanyl-L-aspartate(89)-[ribosomal protein uS12]-hydrogen + (sulfur carrier)-H + 5'-deoxyadenosine + L-methionine + A + S-adenosyl-L-homocysteine + 2 H(+). Catalyzes the methylthiolation of an aspartic acid residue of ribosomal protein uS12. This Rhodopseudomonas palustris (strain BisB18) protein is Ribosomal protein uS12 methylthiotransferase RimO.